The sequence spans 1215 residues: RNA-dependent RNA polymerase 1 (1215 aa).

Belongs to the RdRP family. In terms of assembly, cid12, hrr1 and rdp1 interact forming the RNA-directed RNA polymerase complex (RDRC). The RDRC complex interacts with the RITS complex via interaction between ago1 and hrr1. Clr4 has a role in mediating this interaction.

The protein localises to the cytoplasm. The protein resides in the nucleus. It is found in the chromosome. Its subcellular location is the telomere. It localises to the centromere. The catalysed reaction is RNA(n) + a ribonucleoside 5'-triphosphate = RNA(n+1) + diphosphate. In terms of biological role, has a role in the RNA interference (RNAi) pathway which is important for heterochromatin formation, accurate chromosome segregation, centromere cohesion and telomere function during mitosis and meiosis. Required for both post-transcriptional and transcriptional gene silencing. Required for silencing at the centromeres and for initiation of transcriptionally silent heterochromatin at the mating type locus. Promotes histone H3 'Lys-10' methylation necessary for centromere function. Required for recruitment of swi6 and cohesin to an ectopic dg repeat. A member of the RNA-directed RNA polymerase complex (RDRC) which is involved in the generation of small interfering RNAs (siRNAs) and mediates their association with the RNA-induced transcriptional silencing (RITS) complex. RITS acts as a priming complex for dsRNA synthesis at the site of non-coding centromeric RNA. Its RNA-dependent RNA polymerase activity is critical in siRNA production necessary for heterochromatin formation. In Schizosaccharomyces pombe (strain 972 / ATCC 24843) (Fission yeast), this protein is RNA-dependent RNA polymerase 1 (rdp1).